We begin with the raw amino-acid sequence, 694 residues long: Nucleolin (694 aa).

Residues 1–277 (MVKLAKTPKN…EAKKKKTETP (277 aa)) are disordered. Over residues 26–40 (ESEEEESSDLEESSG) the composition is skewed to acidic residues. Residues 46 to 108 (PPKKQQKAAV…AVVGKGAKNG (63 aa)) are compositionally biased toward low complexity. 5 repeat units span residues 55–61 (VTPAKKA), 62–68 (ATPAKKA), 69–75 (ATPAKKA), 76–82 (VTPAKKA), and 84–90 (ATPAKKA). The 5 X 7 AA tandem repeats of X-T-P-X-K-K-X stretch occupies residues 55–90 (VTPAKKAATPAKKAATPAKKAVTPAKKAVATPAKKA). Phosphoserine occurs at positions 116 and 136. Acidic residues predominate over residues 116–142 (SEEEDEDDEDDEEDEDEEEESDEEEEP). The span at 143–168 (AVPVKPAAKKSAAAVPAKKPAVVPAK) shows a compositional bias: low complexity. At S171 the chain carries Phosphoserine. A compositionally biased stretch (acidic residues) spans 171–194 (SEEEEEEDDEEEDEEDDESEDEAM). Low complexity predominate over residues 196–213 (TTPAPVKKPTPAKATPAK). The segment covering 218–246 (SEDEEDEEDEDEDEEDEDDEEEDEEESED) has biased composition (acidic residues). RRM domains are found at residues 281-357 (FSLF…KAKS), 371-445 (RTLF…YTGE), 461-535 (KTLI…FSSP), and 553-628 (KTLF…FAKP). The segment at 631–694 (EFQRGGGFGG…KPQGKKIKFE (64 aa)) is disordered. Residues 633–680 (QRGGGFGGGFGGRGGRGGRGGGRGGFGGRGGGRGFGGRGGGFRGGRGG) are compositionally biased toward gly residues. Residues 681–694 (GGDHKPQGKKIKFE) show a composition bias toward basic and acidic residues.

Highly phosphorylated during mitosis.

The protein localises to the nucleus. It localises to the nucleolus. In terms of biological role, nucleolin is the major nucleolar protein of growing eukaryotic cells. It is found associated with intranucleolar chromatin and pre-ribosomal particles. It induces chromatin decondensation by binding to histone H1. It is thought to play a role in pre-rRNA transcription and ribosome assembly. The protein is Nucleolin (NCL) of Gallus gallus (Chicken).